A 527-amino-acid polypeptide reads, in one-letter code: Peptide chain release factor 3 (527 aa).

One can recognise a tr-type G domain in the interval 10–278 (DKRRTFAIIS…AFIEYAPAPL (269 aa)). GTP contacts are provided by residues 19 to 26 (SHPDAGKT), 87 to 91 (DTPGH), and 141 to 144 (NKLD).

This sequence belongs to the TRAFAC class translation factor GTPase superfamily. Classic translation factor GTPase family. PrfC subfamily.

The protein resides in the cytoplasm. Its function is as follows. Increases the formation of ribosomal termination complexes and stimulates activities of RF-1 and RF-2. It binds guanine nucleotides and has strong preference for UGA stop codons. It may interact directly with the ribosome. The stimulation of RF-1 and RF-2 is significantly reduced by GTP and GDP, but not by GMP. The polypeptide is Peptide chain release factor 3 (Pelobacter propionicus (strain DSM 2379 / NBRC 103807 / OttBd1)).